The primary structure comprises 183 residues: Adenine phosphoribosyltransferase (183 aa).

The protein belongs to the purine/pyrimidine phosphoribosyltransferase family. As to quaternary structure, homodimer.

It localises to the cytoplasm. The catalysed reaction is AMP + diphosphate = 5-phospho-alpha-D-ribose 1-diphosphate + adenine. Its pathway is purine metabolism; AMP biosynthesis via salvage pathway; AMP from adenine: step 1/1. Functionally, catalyzes a salvage reaction resulting in the formation of AMP, that is energically less costly than de novo synthesis. The protein is Adenine phosphoribosyltransferase of Sodalis glossinidius (strain morsitans).